The following is a 438-amino-acid chain: LIM domain-containing protein C4F6.12 (438 aa).

Disordered regions lie at residues 1–37 (MHSPIPELPRFERRLTGPRAAPSSPVSTNGSPLNNLV) and 49–78 (TGGRIATPLPQPSLKTPESPLSKRNPTIKQ). A compositionally biased stretch (polar residues) spans 24 to 37 (SPVSTNGSPLNNLV). 2 positions are modified to phosphoserine: serine 67 and serine 96. 3 LIM zinc-binding domains span residues 256 to 316 (KSCH…QFSP), 318 to 375 (CKHC…NKYA), and 376 to 435 (VKCK…SVKF).

The protein is LIM domain-containing protein C4F6.12 of Schizosaccharomyces pombe (strain 972 / ATCC 24843) (Fission yeast).